The following is a 203-amino-acid chain: Probable metallo-hydrolase MJ0296 (203 aa).

Zn(2+) is bound by residues H86, H88, D90, H91, H135, D152, and H193.

The protein belongs to the metallo-beta-lactamase superfamily. The cofactor is Zn(2+).

The sequence is that of Probable metallo-hydrolase MJ0296 from Methanocaldococcus jannaschii (strain ATCC 43067 / DSM 2661 / JAL-1 / JCM 10045 / NBRC 100440) (Methanococcus jannaschii).